Here is a 278-residue protein sequence, read N- to C-terminus: Alpha-tocopherol transfer protein (278 aa).

Residues 88–253 (RPRSILGLLK…EYGGKEFSME (166 aa)) enclose the CRAL-TRIO domain. An a 1,2-diacyl-sn-glycero-3-phospho-(1D-myo-inositol-3,4-bisphosphate)-binding site is contributed by aspartate 185. Phenylalanine 187 is a (+)-alpha-tocopherol binding site. Position 190–192 (190–192 (KVR)) interacts with a 1,2-diacyl-sn-glycero-3-phospho-(1D-myo-inositol-3,4-bisphosphate). 208–211 (SMIK) provides a ligand contact to a 1,2-diacyl-sn-glycero-3-phospho-(1D-myo-inositol-4,5-bisphosphate). A 1,2-diacyl-sn-glycero-3-phospho-(1D-myo-inositol-3,4-bisphosphate) is bound by residues lysine 217 and arginine 221.

In terms of assembly, monomer and homotetramer. Phosphatidylinositol 4,5-bisphosphate binding induces the formation of homotetramers. Phosphatidylinositol 3,4-bisphosphate is less efficient in inducing tetramerization.

It is found in the cytoplasm. Functionally, binds (+)-alpha-tocopherol, enhances its transfer between separate membranes, and stimulates its release from liver cells. Binds both phosphatidylinositol 3,4-bisphosphate and phosphatidylinositol 4,5-bisphosphate; the resulting conformation change is important for the release of the bound alpha-tocopherol. The polypeptide is Alpha-tocopherol transfer protein (Ttpa) (Mus musculus (Mouse)).